A 149-amino-acid chain; its full sequence is D-aminoacyl-tRNA deacylase (149 aa).

The Gly-cisPro motif, important for rejection of L-amino acids signature appears at Gly-137–Pro-138.

Belongs to the DTD family. Homodimer.

Its subcellular location is the cytoplasm. The catalysed reaction is glycyl-tRNA(Ala) + H2O = tRNA(Ala) + glycine + H(+). It catalyses the reaction a D-aminoacyl-tRNA + H2O = a tRNA + a D-alpha-amino acid + H(+). Functionally, an aminoacyl-tRNA editing enzyme that deacylates mischarged D-aminoacyl-tRNAs. Also deacylates mischarged glycyl-tRNA(Ala), protecting cells against glycine mischarging by AlaRS. Acts via tRNA-based rather than protein-based catalysis; rejects L-amino acids rather than detecting D-amino acids in the active site. By recycling D-aminoacyl-tRNA to D-amino acids and free tRNA molecules, this enzyme counteracts the toxicity associated with the formation of D-aminoacyl-tRNA entities in vivo and helps enforce protein L-homochirality. This is D-aminoacyl-tRNA deacylase from Thermotoga petrophila (strain ATCC BAA-488 / DSM 13995 / JCM 10881 / RKU-1).